Consider the following 369-residue polypeptide: Cellular tumor antigen p53 (369 aa).

The interval 1-28 is transcription activation (acidic); that stretch reads MAESQEFAELWERNLISTQEAGTCWELI. A DNA-binding region spans residues 66–256; it reads DYPGEHGFKL…KTEESNFRKD (191 aa). 4 residues coordinate Zn(2+): C140, H143, C202, and C206. The interaction with DNA stretch occupies residues 237 to 244; sequence RVCACPGR. Basic and acidic residues predominate over residues 246-263; the sequence is RKTEESNFRKDQETKTLD. Disordered regions lie at residues 246–296 and 318–369; these read RKTE…SGSS and NDSL…SDSD. Positions 269 to 281 are enriched in polar residues; sequence NKRSLTKDSTSSV. The short motif at 270 to 289 is the Bipartite nuclear localization signal element; the sequence is KRSLTKDSTSSVPRPEGSKK. An oligomerization region spans residues 298 to 329; the sequence is EEIYTLQVRGKERYEMLKKINDSLELSDVVPP. A Nuclear export signal motif is present at residues 312 to 323; that stretch reads EMLKKINDSLEL. Positions 342–365 are basic (repression of DNA-binding); that stretch reads KGKKKDGQTPEPKRGKKLMVKDEK. Over residues 346-369 the composition is skewed to basic and acidic residues; it reads KDGQTPEPKRGKKLMVKDEKSDSD.

The protein belongs to the p53 family. In terms of assembly, binds DNA as a homotetramer. The cofactor is Zn(2+).

Its subcellular location is the cytoplasm. It localises to the nucleus. Functionally, multifunctional transcription factor that induces cell cycle arrest, DNA repair or apoptosis upon binding to its target DNA sequence. Acts as a tumor suppressor in many tumor types; induces growth arrest or apoptosis depending on the physiological circumstances and cell type. Negatively regulates cell division by controlling expression of a set of genes required for this process. One of the activated genes is an inhibitor of cyclin-dependent kinases. Apoptosis induction seems to be mediated either by stimulation of BAX and FAS antigen expression, or by repression of Bcl-2 expression. The chain is Cellular tumor antigen p53 (tp53) from Barbus barbus (Barbel).